The chain runs to 117 residues: MTDPELERIRRKKIMELQRKLEESQEKKVEEEREKKALEEAQRRAMLRRILTPEARERLARVRLARPQLAQAVENYLLQLAQTGQLKEKIDEDQLKRILKQVSDATRKEYRIRFKRK.

It belongs to the PDCD5 family.

The protein is DNA-binding protein MK1619 of Methanopyrus kandleri (strain AV19 / DSM 6324 / JCM 9639 / NBRC 100938).